The sequence spans 115 residues: MPMFVVNTNVPRASVPDGFLSELTQQLVQAMGKPAQYIAVHVVPDQLMAFGGSSEPCALCSLHSIGKIGGAQNRSYSKLLCGLLAERLRISPDRIYINYYDMNAANVGWNGSTFA.

The active-site Proton acceptor; via imino nitrogen is the P2. Substrate contacts are provided by K33 and I65. The residue at position 78 (K78) is an N6-acetyllysine; alternate. Position 78 is an N6-succinyllysine; alternate (K78). N98 serves as a coordination point for substrate.

It belongs to the MIF family. As to quaternary structure, homotrimer. Interacts with CXCR2 extracellular domain. Interacts with the CD74 extracellular domain, USO1, COPS5 and BNIPL.

The protein localises to the secreted. It localises to the cytoplasm. It carries out the reaction 3-phenylpyruvate = enol-phenylpyruvate. It catalyses the reaction L-dopachrome = 5,6-dihydroxyindole-2-carboxylate. Functionally, pro-inflammatory cytokine involved in the innate immune response to bacterial pathogens. The expression of MIF at sites of inflammation suggests a role as mediator in regulating the function of macrophages in host defense. Counteracts the anti-inflammatory activity of glucocorticoids. Has phenylpyruvate tautomerase and dopachrome tautomerase activity (in vitro), but the physiological substrate is not known. It is not clear whether the tautomerase activity has any physiological relevance, and whether it is important for cytokine activity. The sequence is that of Macrophage migration inhibitory factor (MIF) from Sus scrofa (Pig).